A 146-amino-acid polypeptide reads, in one-letter code: Hemoglobin subunit beta (146 aa).

The Globin domain occupies 2–146 (HWSAEEKQLI…VAHSLARVYH (145 aa)). Heme b contacts are provided by His63 and His92.

The protein belongs to the globin family. As to quaternary structure, heterotetramer of two alpha chains and two beta chains. In terms of tissue distribution, red blood cells.

Its function is as follows. Involved in oxygen transport from the lung to the various peripheral tissues. The chain is Hemoglobin subunit beta (HBB) from Microcephalophis gracilis (Graceful small-headed sea snake).